Here is a 164-residue protein sequence, read N- to C-terminus: MADS-box transcription factor 51 (164 aa).

In terms of domain architecture, MADS-box spans 2 to 62 (ARRGRVQLRR…GKLYEYSSSS (61 aa)). A disordered region spans residues 133-164 (TKSKKMLAKQNGEGSRSRANSSGSRGQEEGSA).

In terms of tissue distribution, widely expressed.

It is found in the nucleus. Its function is as follows. Probable transcription factor involved in the regulation of flowering time under short day (SD) conditions. Functions as a promoter of flowering under SD conditions, upstream of EHD1, HD3A and MADS14, but downstream of GIGANTEA (GI). May transmit a SD promotion signal from GI to EHD1. Functions independently of MADS50 to control flowering time. The protein is MADS-box transcription factor 51 of Oryza sativa subsp. japonica (Rice).